Reading from the N-terminus, the 629-residue chain is tRNA uridine 5-carboxymethylaminomethyl modification enzyme MnmG (629 aa).

FAD-binding positions include 13-18 (GGGHAG), Val-125, and Ser-180. Position 273–287 (273–287 (GPRYCPSIEDKVMRF)) interacts with NAD(+). Gln-370 lines the FAD pocket.

The protein belongs to the MnmG family. Homodimer. Heterotetramer of two MnmE and two MnmG subunits. FAD is required as a cofactor.

It localises to the cytoplasm. In terms of biological role, NAD-binding protein involved in the addition of a carboxymethylaminomethyl (cmnm) group at the wobble position (U34) of certain tRNAs, forming tRNA-cmnm(5)s(2)U34. The chain is tRNA uridine 5-carboxymethylaminomethyl modification enzyme MnmG from Escherichia coli O127:H6 (strain E2348/69 / EPEC).